The following is a 358-amino-acid chain: Alanine racemase (358 aa).

The active-site Proton acceptor; specific for D-alanine is the Lys35. Lys35 carries the N6-(pyridoxal phosphate)lysine modification. Position 130 (Arg130) interacts with substrate. Tyr255 functions as the Proton acceptor; specific for L-alanine in the catalytic mechanism. Position 303 (Met303) interacts with substrate.

It belongs to the alanine racemase family. Requires pyridoxal 5'-phosphate as cofactor.

It carries out the reaction L-alanine = D-alanine. Its pathway is amino-acid biosynthesis; D-alanine biosynthesis; D-alanine from L-alanine: step 1/1. Its function is as follows. Catalyzes the interconversion of L-alanine and D-alanine. May also act on other amino acids. This is Alanine racemase (alr) from Shewanella sp. (strain MR-4).